Here is a 231-residue protein sequence, read N- to C-terminus: Glutathione-specific gamma-glutamylcyclotransferase (231 aa).

Isoleucine 49–serine 54 contacts substrate. The active-site Proton acceptor is glutamate 127.

This sequence belongs to the gamma-glutamylcyclotransferase family. ChaC subfamily.

The enzyme catalyses glutathione = L-cysteinylglycine + 5-oxo-L-proline. Functionally, catalyzes the cleavage of glutathione into 5-oxo-L-proline and a Cys-Gly dipeptide. Acts specifically on glutathione, but not on other gamma-glutamyl peptides. This is Glutathione-specific gamma-glutamylcyclotransferase from Escherichia coli (strain K12).